The chain runs to 195 residues: Glycerol-3-phosphate acyltransferase (195 aa).

6 helical membrane-spanning segments follow: residues 4-24 (GLILALVFGYLLGSIPFGLLL), 53-73 (GLAAATLLLDALKGTAAVLIA), 80-100 (TAVWAGLGAFLGHLFPVWLGF), 110-130 (LGVLIGLAWQVALIFAVIWLA), 133-153 (FLFRYSSLAALTAAVIVPIAL), and 154-174 (YFLSAPQIAVLFVVMSIIVFI).

Belongs to the PlsY family. Probably interacts with PlsX.

The protein resides in the cell inner membrane. The catalysed reaction is an acyl phosphate + sn-glycerol 3-phosphate = a 1-acyl-sn-glycero-3-phosphate + phosphate. It participates in lipid metabolism; phospholipid metabolism. In terms of biological role, catalyzes the transfer of an acyl group from acyl-phosphate (acyl-PO(4)) to glycerol-3-phosphate (G3P) to form lysophosphatidic acid (LPA). This enzyme utilizes acyl-phosphate as fatty acyl donor, but not acyl-CoA or acyl-ACP. This is Glycerol-3-phosphate acyltransferase from Mesorhizobium japonicum (strain LMG 29417 / CECT 9101 / MAFF 303099) (Mesorhizobium loti (strain MAFF 303099)).